A 239-amino-acid chain; its full sequence is 1-(5-phosphoribosyl)-5-[(5-phosphoribosylamino)methylideneamino] imidazole-4-carboxamide isomerase (239 aa).

Asp-8 serves as the catalytic Proton acceptor. Residue Asp-129 is the Proton donor of the active site.

It belongs to the HisA/HisF family.

Its subcellular location is the cytoplasm. It catalyses the reaction 1-(5-phospho-beta-D-ribosyl)-5-[(5-phospho-beta-D-ribosylamino)methylideneamino]imidazole-4-carboxamide = 5-[(5-phospho-1-deoxy-D-ribulos-1-ylimino)methylamino]-1-(5-phospho-beta-D-ribosyl)imidazole-4-carboxamide. It functions in the pathway amino-acid biosynthesis; L-histidine biosynthesis; L-histidine from 5-phospho-alpha-D-ribose 1-diphosphate: step 4/9. The chain is 1-(5-phosphoribosyl)-5-[(5-phosphoribosylamino)methylideneamino] imidazole-4-carboxamide isomerase from Legionella pneumophila subsp. pneumophila (strain Philadelphia 1 / ATCC 33152 / DSM 7513).